Reading from the N-terminus, the 199-residue chain is Segregation and condensation protein B (199 aa).

The protein belongs to the ScpB family. Homodimer. Homodimerization may be required to stabilize the binding of ScpA to the Smc head domains. Component of a cohesin-like complex composed of ScpA, ScpB and the Smc homodimer, in which ScpA and ScpB bind to the head domain of Smc. The presence of the three proteins is required for the association of the complex with DNA.

It localises to the cytoplasm. Functionally, participates in chromosomal partition during cell division. May act via the formation of a condensin-like complex containing Smc and ScpA that pull DNA away from mid-cell into both cell halves. This is Segregation and condensation protein B from Leuconostoc mesenteroides subsp. mesenteroides (strain ATCC 8293 / DSM 20343 / BCRC 11652 / CCM 1803 / JCM 6124 / NCDO 523 / NBRC 100496 / NCIMB 8023 / NCTC 12954 / NRRL B-1118 / 37Y).